We begin with the raw amino-acid sequence, 355 residues long: S-adenosylmethionine:tRNA ribosyltransferase-isomerase (355 aa).

It belongs to the QueA family. In terms of assembly, monomer.

The protein localises to the cytoplasm. It carries out the reaction 7-aminomethyl-7-carbaguanosine(34) in tRNA + S-adenosyl-L-methionine = epoxyqueuosine(34) in tRNA + adenine + L-methionine + 2 H(+). It participates in tRNA modification; tRNA-queuosine biosynthesis. Its function is as follows. Transfers and isomerizes the ribose moiety from AdoMet to the 7-aminomethyl group of 7-deazaguanine (preQ1-tRNA) to give epoxyqueuosine (oQ-tRNA). This is S-adenosylmethionine:tRNA ribosyltransferase-isomerase from Burkholderia lata (strain ATCC 17760 / DSM 23089 / LMG 22485 / NCIMB 9086 / R18194 / 383).